The chain runs to 75 residues: Translation initiation factor IF-1, chloroplastic (75 aa).

Belongs to the IF-1 family. As to quaternary structure, component of the 30S ribosomal translation pre-initiation complex which assembles on the 30S ribosome in the order IF-2 and IF-3, IF-1 and N-formylmethionyl-tRNA(fMet); mRNA recruitment can occur at any time during PIC assembly.

The protein resides in the plastid. It is found in the chloroplast. In terms of biological role, one of the essential components for the initiation of protein synthesis. Stabilizes the binding of IF-2 and IF-3 on the 30S subunit to which N-formylmethionyl-tRNA(fMet) subsequently binds. Helps modulate mRNA selection, yielding the 30S pre-initiation complex (PIC). Upon addition of the 50S ribosomal subunit IF-1, IF-2 and IF-3 are released leaving the mature 70S translation initiation complex. This chain is Translation initiation factor IF-1, chloroplastic (infA), found in Cucumis sativus (Cucumber).